Consider the following 281-residue polypeptide: sn-glycerol-3-phosphate transport system permease protein UgpE (281 aa).

6 helical membrane-spanning segments follow: residues 16–36 (LILG…AATL), 85–105 (FSIT…IVWF), 113–133 (FFWM…FPTV), 142–162 (LDSY…TFLF), 202–222 (ALFV…LLII), and 247–267 (WNSV…IVLV). An ABC transmembrane type-1 domain is found at 77–268 (LLNSFVMAFS…IPPVVIVLVM (192 aa)).

This sequence belongs to the binding-protein-dependent transport system permease family. UgpAE subfamily. In terms of assembly, the complex is composed of two ATP-binding proteins (UgpC), two transmembrane proteins (UgpA and UgpE) and a solute-binding protein (UgpB).

Its subcellular location is the cell inner membrane. In terms of biological role, part of the ABC transporter complex UgpBAEC involved in sn-glycerol-3-phosphate (G3P) import. Probably responsible for the translocation of the substrate across the membrane. The protein is sn-glycerol-3-phosphate transport system permease protein UgpE (ugpE) of Shigella flexneri serotype 5b (strain 8401).